The sequence spans 340 residues: Dihydroorotate dehydrogenase (quinone) (340 aa).

Residues 63 to 67 (AGLDK) and threonine 87 each bind FMN. Residue lysine 67 coordinates substrate. 112–116 (NRMGF) contributes to the substrate binding site. Asparagine 140 and asparagine 173 together coordinate FMN. Asparagine 173 contacts substrate. Serine 176 acts as the Nucleophile in catalysis. Asparagine 178 provides a ligand contact to substrate. 2 residues coordinate FMN: lysine 218 and threonine 246. 247–248 (NT) is a substrate binding site. FMN is bound by residues glycine 269, glycine 298, and 319–320 (YT).

Belongs to the dihydroorotate dehydrogenase family. Type 2 subfamily. Monomer. Requires FMN as cofactor.

It localises to the cell membrane. The enzyme catalyses (S)-dihydroorotate + a quinone = orotate + a quinol. The protein operates within pyrimidine metabolism; UMP biosynthesis via de novo pathway; orotate from (S)-dihydroorotate (quinone route): step 1/1. In terms of biological role, catalyzes the conversion of dihydroorotate to orotate with quinone as electron acceptor. In Methylococcus capsulatus (strain ATCC 33009 / NCIMB 11132 / Bath), this protein is Dihydroorotate dehydrogenase (quinone).